The sequence spans 334 residues: Chorismatase (334 aa).

Residues Tyr143, Arg150, Tyr203, and Arg216 each coordinate substrate. Residue Glu328 is the Proton acceptor of the active site.

Belongs to the FkbO/Hyg5 family. In terms of assembly, monomer.

It carries out the reaction chorismate + H2O = (3R,4R)-3,4-dihydroxy-3,4-dihydrobenzoate + pyruvate. In terms of biological role, involved in the biosynthesis of the macrocyclic amino acid-linked polyketides rapamycin which is a potent immunosuppressant that prevents T-cell proliferation through initial binding to the immunophilin FKBP12. Catalyzes the hydrolysis of chorismate via a 1,4-conjugate elimination of water to yield (4R,5R)-4,5-dihydroxycyclohexa-1,5-dienecarboxylic acid (DCDC). The chain is Chorismatase (rapK) from Streptomyces rapamycinicus (strain ATCC 29253 / DSM 41530 / NRRL 5491 / AYB-994) (Streptomyces hygroscopicus (strain ATCC 29253)).